Here is a 255-residue protein sequence, read N- to C-terminus: Ribonuclease PH (255 aa).

Phosphate is bound by residues R86 and 124-126; that span reads GTR.

Belongs to the RNase PH family. Homohexameric ring arranged as a trimer of dimers.

It catalyses the reaction tRNA(n+1) + phosphate = tRNA(n) + a ribonucleoside 5'-diphosphate. Functionally, phosphorolytic 3'-5' exoribonuclease that plays an important role in tRNA 3'-end maturation. Removes nucleotide residues following the 3'-CCA terminus of tRNAs; can also add nucleotides to the ends of RNA molecules by using nucleoside diphosphates as substrates, but this may not be physiologically important. Probably plays a role in initiation of 16S rRNA degradation (leading to ribosome degradation) during starvation. This is Ribonuclease PH from Aquifex aeolicus (strain VF5).